The sequence spans 294 residues: Autophagy protein 5 (294 aa).

A Glycyl lysine isopeptide (Lys-Gly) (interchain with G-Cter in ATG12) cross-link involves residue K149.

It belongs to the ATG5 family. In terms of assembly, conjugated with ATG12. The ATG5-ATG12 conjugate forms a complex with several units of ATG16. The ATG12-ATG5 conjugate also associates with ATG3. Post-translationally, conjugated to ATG12; which is essential for autophagy. Conjugation with ATG12 involves ATG7 as an E1-like activating enzyme and ATG10 as an E2-like conjugating enzyme.

The protein resides in the preautophagosomal structure membrane. Its function is as follows. Involved in cytoplasm to vacuole transport (Cvt) and autophagic vesicle formation. Autophagy is essential for maintenance of amino acid levels and protein synthesis under nitrogen starvation. Required for selective autophagic degradation of the nucleus (nucleophagy). Also required for mitophagy, which eliminates defective or superfluous mitochondria in order to fulfill cellular energy requirements and prevent excess ROS production. Conjugation with ATG12, through a ubiquitin-like conjugating system involving ATG7 as an E1-like activating enzyme and ATG10 as an E2-like conjugating enzyme, is essential for its function. The ATG12-ATG5 conjugate acts as an E3-like enzyme which is required for lipidation of ATG8 and ATG8 association to the vesicle membranes. ATG12-ATG5 rearranges the ATG3 catalytic center and enhances its E2 activity. Plays a role in the regulation of filamentous growth and chronological longevity. This Saccharomyces cerevisiae (strain YJM789) (Baker's yeast) protein is Autophagy protein 5 (ATG5).